Here is a 425-residue protein sequence, read N- to C-terminus: MDLQLPRGTRDILPEEVSKWHFLESAFNKVCENYQYEEIRTPIFEHTELFERGVGDSTDIVSKEMYTFLDKGGRSLTLRPEGTASVVRAFVEHKLYGEVSQPIKMYYNEPMFRYERPQGGRQRQFTQMGIEALGSDDPSIDVEVISLAMEFFRKIGLTNIKLVINSLGDKESRLKHREALVAHFEPHIDEFCAECQVRLHKNPLRILDCKKDHDNPLIQSAPSILDFLNEESVAYFENVKKYLTALEIPFEIDPTMVRGLDYYNHTTFEIMSVEEGFGAKTTLCGGGRYHGLVKEFGGPDTPGIGFGIGVERILLALEKAEINIPETKPLEVYVITAQPEAELKAVTLVNKLRQNGISAEKDYLKRKLKAQLKDANRKKAIYTVILGEEELQTGNYQLKNMETGEQEAVSETTIIEKLTNTKEEK.

This sequence belongs to the class-II aminoacyl-tRNA synthetase family. Homodimer.

It localises to the cytoplasm. The enzyme catalyses tRNA(His) + L-histidine + ATP = L-histidyl-tRNA(His) + AMP + diphosphate + H(+). In Listeria innocua serovar 6a (strain ATCC BAA-680 / CLIP 11262), this protein is Histidine--tRNA ligase.